Reading from the N-terminus, the 329-residue chain is GTP 3',8-cyclase (329 aa).

The 227-residue stretch at 8–234 (AFARKFYYLR…QLRQRSDGPA (227 aa)) folds into the Radical SAM core domain. R17 provides a ligand contact to GTP. Residues C24 and C28 each contribute to the [4Fe-4S] cluster site. Y30 contributes to the S-adenosyl-L-methionine binding site. Position 31 (C31) interacts with [4Fe-4S] cluster. R68 provides a ligand contact to GTP. G72 provides a ligand contact to S-adenosyl-L-methionine. T99 contributes to the GTP binding site. S123 serves as a coordination point for S-adenosyl-L-methionine. Residue K160 coordinates GTP. S-adenosyl-L-methionine is bound at residue M194. Residues C257 and C260 each contribute to the [4Fe-4S] cluster site. A GTP-binding site is contributed by 262–264 (RLR). Position 274 (C274) interacts with [4Fe-4S] cluster.

Belongs to the radical SAM superfamily. MoaA family. As to quaternary structure, monomer and homodimer. [4Fe-4S] cluster serves as cofactor.

The enzyme catalyses GTP + AH2 + S-adenosyl-L-methionine = (8S)-3',8-cyclo-7,8-dihydroguanosine 5'-triphosphate + 5'-deoxyadenosine + L-methionine + A + H(+). It functions in the pathway cofactor biosynthesis; molybdopterin biosynthesis. In terms of biological role, catalyzes the cyclization of GTP to (8S)-3',8-cyclo-7,8-dihydroguanosine 5'-triphosphate. The sequence is that of GTP 3',8-cyclase from Shigella sonnei (strain Ss046).